Consider the following 169-residue polypeptide: Cell division inhibitor SulA (169 aa).

Residues Ala106–Tyr112 form a ftsZ binding region. The tract at residues Lys162–His169 is lon protease binding.

This sequence belongs to the SulA family. Interacts with FtsZ. In terms of processing, is rapidly cleaved and degraded by the Lon protease once DNA damage is repaired.

Functionally, component of the SOS system and an inhibitor of cell division. Accumulation of SulA causes rapid cessation of cell division and the appearance of long, non-septate filaments. In the presence of GTP, binds a polymerization-competent form of FtsZ in a 1:1 ratio, thus inhibiting FtsZ polymerization and therefore preventing it from participating in the assembly of the Z ring. This mechanism prevents the premature segregation of damaged DNA to daughter cells during cell division. The chain is Cell division inhibitor SulA from Escherichia coli O45:K1 (strain S88 / ExPEC).